A 372-amino-acid polypeptide reads, in one-letter code: Rab9 effector protein with kelch motifs (372 aa).

Kelch repeat units follow at residues 49-95, 100-146, 151-200, 204-250, and 254-303; these read KVFI…FIPS, RIWV…TSSA, QLYV…VMVA, KLFI…SAVA, and HVYI…IIPW. Residue serine 133 is modified to Phosphoserine. A disordered region spans residues 314–340; it reads SNSLTLNHEAEKEDSADKVMSHSGDSH. Over residues 321–340 the composition is skewed to basic and acidic residues; sequence HEAEKEDSADKVMSHSGDSH.

Interacts with PIKFYVE; the interaction recruits RABEPK to the endosomal membrane. Interacts with RAB9 in its GTP-bound conformation. Post-translationally, phosphorylated on Ser residues by PIKFYVE.

The protein localises to the cytoplasm. Its subcellular location is the endosome membrane. Rab9 effector required for endosome to trans-Golgi network (TGN) transport. The chain is Rab9 effector protein with kelch motifs from Homo sapiens (Human).